The sequence spans 825 residues: Probable inorganic carbon transporter subunit DabA (825 aa).

4 residues coordinate Zn(2+): cysteine 346, aspartate 348, histidine 516, and cysteine 531.

Belongs to the inorganic carbon transporter (TC 9.A.2) DabA family. Forms a complex with DabB. Zn(2+) serves as cofactor.

The protein localises to the cell inner membrane. Its function is as follows. Part of an energy-coupled inorganic carbon pump. The sequence is that of Probable inorganic carbon transporter subunit DabA from Paracidovorax citrulli (strain AAC00-1) (Acidovorax citrulli).